A 205-amino-acid polypeptide reads, in one-letter code: Dephospho-CoA kinase (205 aa).

The 199-residue stretch at 7–205 (IIGITGRIAS…QEIINYERFE (199 aa)) folds into the DPCK domain. 15 to 20 (ASGKDA) serves as a coordination point for ATP.

The protein belongs to the CoaE family.

It localises to the cytoplasm. It catalyses the reaction 3'-dephospho-CoA + ATP = ADP + CoA + H(+). It participates in cofactor biosynthesis; coenzyme A biosynthesis; CoA from (R)-pantothenate: step 5/5. Catalyzes the phosphorylation of the 3'-hydroxyl group of dephosphocoenzyme A to form coenzyme A. This chain is Dephospho-CoA kinase, found in Borrelia garinii subsp. bavariensis (strain ATCC BAA-2496 / DSM 23469 / PBi) (Borreliella bavariensis).